The chain runs to 329 residues: Beta-tectorin (329 aa).

The signal sequence occupies residues 1–17; sequence MVAVTVYLMVILAQAFA. Residues 19-287 form the ZP domain; that stretch reads PCTPNKADVI…VTCDKRKQRM (269 aa). 4 N-linked (GlcNAc...) asparagine glycosylation sites follow: Asn80, Asn104, Asn116, and Asn145. An intrachain disulfide couples Cys204 to Cys264. Residue Gly304 is the site of GPI-anchor amidated glycine attachment. Residues 305 to 329 constitute a propeptide, removed in mature form; that stretch reads LSRFYMLSDVIFHLLFAIGFCAILL.

As to quaternary structure, may form homomeric filament after self-association or heteromeric filament after association with alpha-tectorin. Post-translationally, the N-terminus is blocked. In terms of processing, N-glycosylated. The presence of a hydrophobic C-terminus preceded by a potential cleavage site strongly suggests that tectorins are synthesized as glycosylphosphatidylinositol-linked, membrane-bound precursors. Tectorins are targeted to the apical surface of the inner ear epithelia by the lipid and proteolytically released into the extracellular compartment. As to expression, exclusively expressed in the inner ear, where it is found in basilar papilla, clear cells, supporting cells, cuboidal cells and the lagena macula.

It is found in the cell membrane. The protein localises to the secreted. The protein resides in the extracellular space. Its subcellular location is the extracellular matrix. In terms of biological role, one of the major non-collagenous components of the tectorial membrane. The tectorial membrane is an extracellular matrix of the inner ear that covers the neuroepithelium of the cochlea and contacts the stereocilia bundles of specialized sensory hair cells. Sound induces movement of these hair cells relative to the tectorial membrane, deflects the stereocilia and leads to fluctuations in hair-cell membrane potential, transducing sound into electrical signals. In Gallus gallus (Chicken), this protein is Beta-tectorin (TECTB).